The following is a 357-amino-acid chain: AA9 family lytic polysaccharide monooxygenase B (357 aa).

Residues methionine 1–serine 18 form the signal peptide. Residues histidine 19 and histidine 101 each coordinate Cu(2+). Residues histidine 19 to alanine 234 form a catalytic region. The cysteines at positions 61 and 182 are disulfide-linked. Residues histidine 168 and glutamine 177 each coordinate O2. Tyrosine 179 provides a ligand contact to Cu(2+). The tract at residues serine 235–threonine 318 is ser/Thr-rich linker. A disordered region spans residues serine 292–glycine 317. A compositionally biased stretch (low complexity) spans proline 295–threonine 313. The CBM1 domain maps to glycine 319–valine 355.

It belongs to the polysaccharide monooxygenase AA9 family. It depends on Cu(2+) as a cofactor.

It localises to the secreted. The enzyme catalyses [(1-&gt;4)-beta-D-glucosyl]n+m + reduced acceptor + O2 = 4-dehydro-beta-D-glucosyl-[(1-&gt;4)-beta-D-glucosyl]n-1 + [(1-&gt;4)-beta-D-glucosyl]m + acceptor + H2O.. In terms of biological role, lytic polysaccharide monooxygenase (LPMO) that depolymerizes crystalline and amorphous polysaccharides via the oxidation of scissile alpha- or beta-(1-4)-glycosidic bonds, yielding C4 oxidation products. Catalysis by LPMOs requires the reduction of the active-site copper from Cu(II) to Cu(I) by a reducing agent and H(2)O(2) or O(2) as a cosubstrate. Active on carboxymethylcellulose (CMC), hydroxyethylcellulose (HEC) and beta-glucan. Also active on soluble cellohexaose, a property that is restricted to only a few characterized LPMOs. This Emericella nidulans (strain FGSC A4 / ATCC 38163 / CBS 112.46 / NRRL 194 / M139) (Aspergillus nidulans) protein is AA9 family lytic polysaccharide monooxygenase B.